The sequence spans 306 residues: Type 3 secretion system translocon protein SctB (306 aa).

The chain crosses the membrane as a helical span at residues 128–152 (LMIAMAVVSGIMAATSTVASAFSIA).

The protein belongs to the SctB/YopD family. In terms of assembly, the core secretion machinery of the T3SS is composed of approximately 20 different proteins, including cytoplasmic components, a base, an export apparatus and a needle. This subunit is involved in the formation of a pore, called the translocon, in host membrane. Interacts with YopB/SctE and YopE. Together with YopB/SctE, forms a multimeric integral membrane complex with a mass of between 500 and 700 kDa. Interacts with its cognate chaperone SycD.

It localises to the secreted. It is found in the host membrane. Functionally, component of the type III secretion system (T3SS), also called injectisome, which is used to inject bacterial effector proteins into eukaryotic host cells. YopB/SctE and YopD/SctB are inserted into the host membrane where they form a pore and allow the translocation of effector proteins into the cytosol of target cells. In terms of biological role, involved in pathogenesis. Essential for the establishment of Yersinia infections in a mouse model system, but not for the targeting of effector Yops. May modulate the host's immune response at a distance from the site of infection. This Yersinia enterocolitica protein is Type 3 secretion system translocon protein SctB.